We begin with the raw amino-acid sequence, 620 residues long: Glutathione-regulated potassium-efflux system protein KefC (620 aa).

The next 12 membrane-spanning stretches (helical) occupy residues 4-24, 26-46, 54-74, 90-110, 114-134, 149-169, 178-198, 218-238, 270-290, 294-314, 327-347, and 359-379; these read HTLL…PIAV, LGLG…PWGL, SILH…GLEL, GALQ…FLGL, VAEL…MQAM, FAVL…IPLL, LGAF…VVLL, VFSA…EEVG, GLLL…GTLV, LRIL…LWLV, WFAV…GAAQ, and ALTL…VLLT. The 120-residue stretch at 399–518 folds into the RCK N-terminal domain; it reads QPRVIVAGFG…AGVAMPERET (120 aa). The segment at 599-620 is disordered; the sequence is QGTAEGKHSGEAADEPEVKPSI.

The protein belongs to the monovalent cation:proton antiporter 2 (CPA2) transporter (TC 2.A.37) family. KefC subfamily. In terms of assembly, homodimer. Interacts with the regulatory subunit KefF.

It is found in the cell inner membrane. Its function is as follows. Pore-forming subunit of a potassium efflux system that confers protection against electrophiles. Catalyzes K(+)/H(+) antiport. In Salmonella dublin (strain CT_02021853), this protein is Glutathione-regulated potassium-efflux system protein KefC.